The sequence spans 440 residues: Signal recognition particle 54 kDa protein (440 aa).

GTP contacts are provided by residues 104–111, 184–188, and 242–245; these read GLQGSGKT, DTAGR, and TKLD.

This sequence belongs to the GTP-binding SRP family. SRP54 subfamily. In terms of assembly, part of the signal recognition particle protein translocation system, which is composed of SRP and FtsY. Archaeal SRP consists of a 7S RNA molecule of 300 nucleotides and two protein subunits: SRP54 and SRP19.

It is found in the cytoplasm. It carries out the reaction GTP + H2O = GDP + phosphate + H(+). Its function is as follows. Involved in targeting and insertion of nascent membrane proteins into the cytoplasmic membrane. Binds to the hydrophobic signal sequence of the ribosome-nascent chain (RNC) as it emerges from the ribosomes. The SRP-RNC complex is then targeted to the cytoplasmic membrane where it interacts with the SRP receptor FtsY. The protein is Signal recognition particle 54 kDa protein of Methanosarcina acetivorans (strain ATCC 35395 / DSM 2834 / JCM 12185 / C2A).